A 1358-amino-acid chain; its full sequence is Phosphoinositide 3-kinase regulatory subunit 4 (1358 aa).

A lipid anchor (N-myristoyl glycine) is attached at G2. The region spanning 26–324 (FEYDKSLGST…AFPEIFYTFL (299 aa)) is the Protein kinase domain. ATP contacts are provided by residues 32–40 (LGSTRFFKV) and K53. Catalysis depends on D148, which acts as the Proton acceptor. 4 HEAT repeats span residues 413 to 450 (ILLD…LVQE), 458 to 495 (IYPE…TALR), 572 to 610 (KAND…YVGW), and 612 to 648 (SSSI…LGLL). S808, S813, S853, and S865 each carry phosphoserine. WD repeat units follow at residues 991–1030 (EHKS…GKTT), 1040–1079 (RIGG…LPKS), 1093–1134 (KEDG…NAWT), 1139–1178 (LKSG…PISS), 1182–1223 (PSRA…RRLT), and 1237–1278 (PSPH…RSYV). Residues 1307 to 1326 (KQKVGPSDDTPRRGPESLPV) form a disordered region. Residues 1315 to 1326 (DTPRRGPESLPV) show a composition bias toward basic and acidic residues. A Phosphothreonine modification is found at T1316. Residues 1327–1358 (GHHDIITDIATFQTTQGFIVTASRDGIVKVWK) form a WD 7 repeat.

Belongs to the protein kinase superfamily. Ser/Thr protein kinase family. Component of the PI3K (PI3KC3/PI3K-III/class III phosphatidylinositol 3-kinase) complex the core of which is composed of the catalytic subunit PIK3C3, the regulatory subunit PIK3R4 and BECN1 associating with additional regulatory/auxiliary subunits to form alternative complex forms. Alternative complex forms containing a fourth regulatory subunit in a mutually exclusive manner are PI3K complex I (PI3KC3-C1) containing ATG14, and PI3K complex II (PI3KC3-C2) containing UVRAG. PI3KC3-C1 displays a V-shaped architecture with PIK3R4 serving as a bridge between PIK3C3 and the ATG14:BECN1 subcomplex. Both, PI3KC3-C1 and PI3KC3-C2, can associate with further regulatory subunits, such as RUBCN, SH3GLB1/Bif-1, AMBRA1 and NRBF2. PI3KC3-C1 probably associates with PIK3CB. Interacts with RAB7A in the presence of PIK3C3/VPS34. Interacts with NRBF2. Interacts with ARMC3. Mn(2+) serves as cofactor. Myristoylated. Post-translationally, probably autophosphorylated.

The protein localises to the late endosome. Its subcellular location is the cytoplasmic vesicle. It localises to the autophagosome. It is found in the membrane. It catalyses the reaction L-seryl-[protein] + ATP = O-phospho-L-seryl-[protein] + ADP + H(+). It carries out the reaction L-threonyl-[protein] + ATP = O-phospho-L-threonyl-[protein] + ADP + H(+). Functionally, regulatory subunit of the PI3K complex that mediates formation of phosphatidylinositol 3-phosphate; different complex forms are believed to play a role in multiple membrane trafficking pathways: PI3KC3-C1 is involved in initiation of autophagosomes and PI3KC3-C2 in maturation of autophagosomes and endocytosis. Involved in regulation of degradative endocytic trafficking and cytokinesis, probably in the context of PI3KC3-C2. The chain is Phosphoinositide 3-kinase regulatory subunit 4 (Pik3r4) from Mus musculus (Mouse).